Here is a 203-residue protein sequence, read N- to C-terminus: Excretory canal abnormal exc-13 (203 aa).

The N-terminal stretch at 1 to 20 (MIGFLKFALIGTVLLGVANG) is a signal peptide. N-linked (GlcNAc...) asparagine glycans are attached at residues Asn32, Asn84, and Asn188.

This sequence belongs to the UPF0376 family.

The protein resides in the secreted. The protein is Excretory canal abnormal exc-13 of Caenorhabditis elegans.